A 343-amino-acid chain; its full sequence is Tetraacyldisaccharide 4'-kinase (343 aa).

Gly-61–Thr-68 provides a ligand contact to ATP.

Belongs to the LpxK family.

The enzyme catalyses a lipid A disaccharide + ATP = a lipid IVA + ADP + H(+). The protein operates within glycolipid biosynthesis; lipid IV(A) biosynthesis; lipid IV(A) from (3R)-3-hydroxytetradecanoyl-[acyl-carrier-protein] and UDP-N-acetyl-alpha-D-glucosamine: step 6/6. Transfers the gamma-phosphate of ATP to the 4'-position of a tetraacyldisaccharide 1-phosphate intermediate (termed DS-1-P) to form tetraacyldisaccharide 1,4'-bis-phosphate (lipid IVA). The sequence is that of Tetraacyldisaccharide 4'-kinase from Colwellia psychrerythraea (strain 34H / ATCC BAA-681) (Vibrio psychroerythus).